Reading from the N-terminus, the 297-residue chain is Cytidine deaminase (297 aa).

CMP/dCMP-type deaminase domains lie at Ser54–Lys174 and Leu192–Val297. Asn95 to Glu97 serves as a coordination point for substrate. His108 contributes to the Zn(2+) binding site. Glu110 serves as the catalytic Proton donor. Residues Cys135 and Cys138 each contribute to the Zn(2+) site.

It belongs to the cytidine and deoxycytidylate deaminase family. In terms of assembly, homodimer. Zn(2+) serves as cofactor.

The enzyme catalyses cytidine + H2O + H(+) = uridine + NH4(+). The catalysed reaction is 2'-deoxycytidine + H2O + H(+) = 2'-deoxyuridine + NH4(+). Its function is as follows. This enzyme scavenges exogenous and endogenous cytidine and 2'-deoxycytidine for UMP synthesis. This Actinobacillus pleuropneumoniae serotype 5b (strain L20) protein is Cytidine deaminase.